Reading from the N-terminus, the 323-residue chain is 8-oxo-dGDP phosphatase NUDT18 (323 aa).

Residues 37–167 form the Nudix hydrolase domain; that stretch reads RLRKNVCYVV…DILHLVELAA (131 aa). L58 is a binding site for Mg(2+). The Nudix box motif lies at 76–97; sequence GRMEPGETIVEALQREVKEEAG.

It belongs to the Nudix hydrolase family. The cofactor is Mn(2+). It depends on Mg(2+) as a cofactor.

The enzyme catalyses 8-oxo-dGDP + H2O = 8-oxo-dGMP + phosphate + H(+). The catalysed reaction is 8-oxo-dADP + H2O = 8-oxo-dAMP + phosphate + H(+). It carries out the reaction 2-oxo-dADP + H2O = 2-oxo-dAMP + phosphate + H(+). It catalyses the reaction 8-oxo-GDP + H2O = 8-oxo-GMP + phosphate + H(+). In terms of biological role, mediates the hydrolysis of oxidized nucleoside diphosphate derivatives. Hydrolyzes 8-oxo-7,8-dihydroguanine (8-oxo-Gua)-containing deoxyribo- and ribonucleoside diphosphates to the monophosphates. Hydrolyzes 8-oxo-dGDP and 8-oxo-GDP with the same efficiencies. Also hydrolyzes 8-OH-dADP and 2-OH-dADP. Exhibited no or minimal hydrolysis activity against 8-oxo-dGTP, 8-oxo-GTP, dGTP, GTP, dGDP and GDP. Probably removes oxidized guanine nucleotides from both the DNA and RNA precursor pools. This is 8-oxo-dGDP phosphatase NUDT18 from Homo sapiens (Human).